Consider the following 236-residue polypeptide: Large ribosomal subunit protein uL1 (236 aa).

This sequence belongs to the universal ribosomal protein uL1 family. As to quaternary structure, part of the 50S ribosomal subunit.

Binds directly to 23S rRNA. The L1 stalk is quite mobile in the ribosome, and is involved in E site tRNA release. In terms of biological role, protein L1 is also a translational repressor protein, it controls the translation of the L11 operon by binding to its mRNA. In Corynebacterium glutamicum (strain R), this protein is Large ribosomal subunit protein uL1.